Here is a 353-residue protein sequence, read N- to C-terminus: AA9 family lytic polysaccharide monooxygenase A (353 aa).

The N-terminal stretch at 1-19 (MKSTFGLLALAAAAKMAHA) is a signal peptide. Residues H20 and H102 each contribute to the Cu(2+) site. A disulfide bridge connects residues C62 and C183. Residue H169 coordinates O2. Y180 provides a ligand contact to Cu(2+). Residues 266 to 276 (KPTTTTAAAPA) are compositionally biased toward low complexity. The tract at residues 266 to 316 (KPTTTTAAAPAETDSCDGDDDDYETETPAPQASATQAPAPQRPAPQTPSGS) is disordered. A compositionally biased stretch (acidic residues) spans 279–290 (DSCDGDDDDYET). Residues 291–304 (ETPAPQASATQAPA) are compositionally biased toward low complexity. The region spanning 315–351 (GSVKEWYQCGGINYTGAKNCESGLVCKEWNPYYHQCI) is the CBM1 domain. N327 carries an N-linked (GlcNAc...) asparagine glycan.

This sequence belongs to the polysaccharide monooxygenase AA9 family. Cu(2+) serves as cofactor.

The protein localises to the secreted. The enzyme catalyses [(1-&gt;4)-beta-D-glucosyl]n+m + reduced acceptor + O2 = 4-dehydro-beta-D-glucosyl-[(1-&gt;4)-beta-D-glucosyl]n-1 + [(1-&gt;4)-beta-D-glucosyl]m + acceptor + H2O.. In terms of biological role, lytic polysaccharide monooxygenase (LPMO) that depolymerizes crystalline and amorphous polysaccharides via the oxidation of scissile alpha- or beta-(1-4)-glycosidic bonds, yielding C4 oxidation products. Catalysis by LPMOs requires the reduction of the active-site copper from Cu(II) to Cu(I) by a reducing agent and H(2)O(2) or O(2) as a cosubstrate. The chain is AA9 family lytic polysaccharide monooxygenase A (eglD) from Aspergillus clavatus (strain ATCC 1007 / CBS 513.65 / DSM 816 / NCTC 3887 / NRRL 1 / QM 1276 / 107).